The chain runs to 507 residues: uncharacterized protein (507 aa).

A run of 12 helical transmembrane segments spans residues 46 to 66, 83 to 103, 112 to 132, 141 to 161, 181 to 201, 207 to 227, 263 to 283, 299 to 319, 328 to 348, 354 to 374, 389 to 409, and 442 to 462; these read WIVL…WIGY, AWLS…AMWA, AVLI…ISSL, FPIC…IMFL, IGVM…PAIV, VIWL…IATF, IILL…YTVM, VCAA…SIFV, TLKI…QLTL, VILG…YPIG, TSTG…VFIM, and MSIM…VVLF. The segment covering 477–493 has biased composition (basic and acidic residues); the sequence is ATADKAKELSNQNKDRI. The interval 477–507 is disordered; the sequence is ATADKAKELSNQNKDRITLQAESAVEPLQKK.

It is found in the membrane. This is an uncharacterized protein from Caenorhabditis elegans.